We begin with the raw amino-acid sequence, 384 residues long: V-type proton ATPase subunit C 2 (384 aa).

This sequence belongs to the V-ATPase C subunit family. As to quaternary structure, V-ATPase is a heteromultimeric enzyme made up of two complexes: the ATP-hydrolytic V1 complex and the proton translocation V0 complex. The V1 complex consists of three catalytic AB heterodimers that form a heterohexamer, three peripheral stalks each consisting of EG heterodimers, one central rotor including subunits D and F, and the regulatory subunits C and H. The proton translocation complex V0 consists of the proton transport subunit a, a ring of proteolipid subunits c9c'', rotary subunit d, subunits e and f, and the accessory subunits vah-19/Ac45 and vah-20/PRR.

Subunit of the V1 complex of vacuolar(H+)-ATPase (V-ATPase), a multisubunit enzyme composed of a peripheral complex (V1) that hydrolyzes ATP and a membrane integral complex (V0) that translocates protons. V-ATPase is responsible for acidifying and maintaining the pH of intracellular compartments and in some cell types, is targeted to the plasma membrane, where it is responsible for acidifying the extracellular environment. Subunit C is necessary for the assembly of the catalytic sector of the enzyme and is likely to have a specific function in its catalytic activity. The chain is V-type proton ATPase subunit C 2 (VATC) from Ascidia sydneiensis samea (Vanadium-rich ascidian).